A 481-amino-acid polypeptide reads, in one-letter code: Probable Xaa-Pro aminopeptidase PEPP (481 aa).

Positions 265, 276, 399, and 439 each coordinate Mn(2+).

Belongs to the peptidase M24B family. It depends on Mn(2+) as a cofactor.

The catalysed reaction is Release of any N-terminal amino acid, including proline, that is linked to proline, even from a dipeptide or tripeptide.. Catalyzes the removal of a penultimate prolyl residue from the N-termini of peptides. This is Probable Xaa-Pro aminopeptidase PEPP (PEPP) from Uncinocarpus reesii (strain UAMH 1704).